Reading from the N-terminus, the 61-residue chain is Small ribosomal subunit protein uS14 (61 aa).

The Zn(2+) site is built by Cys24, Cys27, Cys40, and Cys43.

Belongs to the universal ribosomal protein uS14 family. Zinc-binding uS14 subfamily. Part of the 30S ribosomal subunit. Contacts proteins S3 and S10. Zn(2+) is required as a cofactor.

Its function is as follows. Binds 16S rRNA, required for the assembly of 30S particles and may also be responsible for determining the conformation of the 16S rRNA at the A site. This is Small ribosomal subunit protein uS14 from Clostridium acetobutylicum (strain ATCC 824 / DSM 792 / JCM 1419 / IAM 19013 / LMG 5710 / NBRC 13948 / NRRL B-527 / VKM B-1787 / 2291 / W).